The following is a 122-amino-acid chain: Phospholipase A2 homolog ECS_00014 (122 aa).

7 cysteine pairs are disulfide-bonded: cysteine 26–cysteine 115, cysteine 28–cysteine 44, cysteine 43–cysteine 95, cysteine 49–cysteine 122, cysteine 50–cysteine 88, cysteine 57–cysteine 81, and cysteine 75–cysteine 86. Positions 105 to 117 are important for membrane-damaging activities in eukaryotes and bacteria; heparin-binding; that stretch reads KKYTYYPNFWCKG.

This sequence belongs to the phospholipase A2 family. Group II subfamily. S49 sub-subfamily. Monomer. As to expression, expressed by the venom gland.

The protein localises to the secreted. In terms of biological role, snake venom phospholipase A2 homolog that lacks enzymatic activity. Shows high myotoxin activities and displays edema-inducing activities. Has cytotoxic activities against HUVEC cells (LC(50)=12.2 uL) and human lung adenocarcinoma A549 cells (LC(50)=8.5 uL). The polypeptide is Phospholipase A2 homolog ECS_00014 (Echis carinatus sochureki (Saw-scaled viper)).